A 128-amino-acid polypeptide reads, in one-letter code: UPF0212 protein TGAM_1344 (128 aa).

Belongs to the UPF0212 family.

This is UPF0212 protein TGAM_1344 from Thermococcus gammatolerans (strain DSM 15229 / JCM 11827 / EJ3).